The chain runs to 375 residues: MQLQFRSWMLAALTLLVVFLIFADISEIEEEIGNSGGRGTIRSAVNSLHSKSNRAEVVINGSSLPAVADRSNESLKHSIQPASSKWRHNQTLSLRIRKQILKFLDAEKDISVLKGTLKPGDIIHYIFDRDSTMNVSQNLYELLPRTSPLKNKHFQTCAIVGNSGVLLNSGCGQEIDTHSFVIRCNLAPVQEYARDVGLKTDLVTMNPSVIQRAFEDLVNATWREKLLQRLHGLNGSILWIPAFMARGGKERVEWVNALILKHHVNVRTAYPSLRLLHAVRGYWLTNKVHIKRPTTGLLMYTLATRFCNQIYLYGFWPFPLDQNQNPVKYHYYDSLKYGYTSQASPHTMPLEFKALKSLHEQGALKLTVGQCDGAT.

Over 1 to 6 the chain is Cytoplasmic; it reads MQLQFR. Residues 7-23 form a helical; Signal-anchor for type II membrane protein membrane-spanning segment; it reads SWMLAALTLLVVFLIFA. Residues 24 to 375 are Lumenal-facing; that stretch reads DISEIEEEIG…LTVGQCDGAT (352 aa). N-linked (GlcNAc...) asparagine glycans are attached at residues Asn60, Asn72, Asn89, and Asn134. 2 disulfides stabilise this stretch: Cys157/Cys307 and Cys171/Cys371. Residues Asn162 and Asn185 each coordinate CMP-N-acetyl-beta-neuraminate. Residues Asn219 and Asn234 are each glycosylated (N-linked (GlcNAc...) asparagine). Positions 294, 295, 296, 316, 329, and 330 each coordinate CMP-N-acetyl-beta-neuraminate. The Proton donor/acceptor role is filled by His346.

This sequence belongs to the glycosyltransferase 29 family. Autopolysialylated. Autopolysialylation is not a prerequisite for the polysialylation acitity, but enhances the polysialylation acitity. In terms of tissue distribution, expressed only in newborn brain.

It is found in the golgi apparatus membrane. The protein localises to the secreted. The protein resides in the cell membrane. It carries out the reaction [N-acetyl-alpha-D-neuraminosyl-(2-&gt;8)](n) + CMP-N-acetyl-beta-neuraminate = [N-acetyl-alpha-D-neuraminosyl-(2-&gt;8)](n+1) + CMP + H(+). It participates in protein modification; protein glycosylation. Functionally, catalyzes the transfer of a sialic acid from a CMP-linked sialic acid donor onto a terminal alpha-2,3-, alpha-2,6-, or alpha-2,8-linked sialic acid of an N-linked glycan acceptor through alpha-2,8-linkages. Therefore, participates in polysialic acid synthesis on various sialylated N-acetyllactosaminyl oligosaccharides (alpha-2,3-, alpha-2,6-, or alpha-2,8-linked sialic acid), including NCAM1, NCAM1 N-glycans, FETUB N-glycans, and to a lesser extent sialylparagloboside (SPG) and AHSG, which does not require the initial addition of an alpha 2,8-sialic acid. However, does not exhibit sialic acid-polymerase activity. Catalyzes polysialic acid synthesis in the hippocampal on NCAM1 and supports neurite outgrowth. ST8SIA2-mediated polysialylation influences on oligodendrocyte differentiation and may promote the integrity of myelin and axons. The chain is Alpha-2,8-sialyltransferase 8B from Rattus norvegicus (Rat).